The primary structure comprises 265 residues: Dehydrogenase RED2 (265 aa).

The helical transmembrane segment at 6 to 26 (SFLLSKLFLCIALCTAYVAFS) threads the bilayer. Asn45 is a glycosylation site (N-linked (GlcNAc...) asparagine). Residues 47 to 67 (TSTVFGLTIVAIGLSALSSWL) form a helical membrane-spanning segment. The N-linked (GlcNAc...) asparagine glycan is linked to Asn74. Val89 contributes to the NADP(+) binding site. Asn127 carries an N-linked (GlcNAc...) asparagine glycan. The NADP(+) site is built by Asp136 and Asn163. Residue Asn176 is glycosylated (N-linked (GlcNAc...) asparagine). Ser216 acts as the Proton donor in catalysis. NADP(+) is bound by residues Tyr228 and Lys232. The active-site Proton acceptor is the Tyr228. The active-site Lowers pKa of active site Tyr is Lys232.

The protein belongs to the short-chain dehydrogenases/reductases (SDR) family.

The protein resides in the membrane. It catalyses the reaction a primary alcohol + NAD(+) = an aldehyde + NADH + H(+). The catalysed reaction is a secondary alcohol + NAD(+) = a ketone + NADH + H(+). It functions in the pathway mycotoxin biosynthesis. Functionally, dehydrogenase; part of the Tox1B locus, one of the 2 loci that mediate the biosynthesis of T-toxin, a family of linear polyketides 37 to 45 carbons in length, of which the major component is 41 carbons, and which leads to high virulence to maize. One of the PKSs (PKS1 or PKS2) could synthesize a precursor, used subsequently by the other PKS as starter unit, to add additional carbons. Variability in the length of the final carbon backbone C35-47 could be achieved by varying the number of condensation cycles, or use of different starter or extender units or might be due to decarboxylation of the penultimate product, catalyzed by DEC1. Additional proteins are required for the biosynthesis of T-toxin, including oxidoreductases RED1, RED2, RED3, LAM1 and OXI1, as well as esterase TOX9. This is Dehydrogenase RED2 from Cochliobolus heterostrophus (strain C4 / ATCC 48331 / race T) (Southern corn leaf blight fungus).